Here is a 251-residue protein sequence, read N- to C-terminus: Small ribosomal subunit protein uS3 (251 aa).

Residues 39–109 enclose the KH type-2 domain; it reads IRNYVQARLK…EVKIDVIEVI (71 aa). Positions 222 to 239 are enriched in basic and acidic residues; sequence LKKIKDRRGEQRSRGRDS. Positions 222–251 are disordered; sequence LKKIKDRRGEQRSRGRDSRNRRRRKPRQTT. Positions 240 to 251 are enriched in basic residues; that stretch reads RNRRRRKPRQTT.

The protein belongs to the universal ribosomal protein uS3 family. In terms of assembly, part of the 30S ribosomal subunit. Forms a tight complex with proteins S10 and S14.

Binds the lower part of the 30S subunit head. Binds mRNA in the 70S ribosome, positioning it for translation. The protein is Small ribosomal subunit protein uS3 of Prosthecochloris aestuarii (strain DSM 271 / SK 413).